The primary structure comprises 341 residues: HTH-type transcriptional repressor PurR (341 aa).

In terms of domain architecture, HTH lacI-type spans 2 to 56; sequence ATIKDVAKRANVSTTTVSHVINKTRFVAEETRNAVWAAIKELHYSPSAVARSLKV. A DNA-binding region (H-T-H motif) is located at residues 4–23; it reads IKDVAKRANVSTTTVSHVIN. The DNA-binding element occupies 48–56; that stretch reads SAVARSLKV. Positions 73, 190, 192, 221, and 275 each coordinate hypoxanthine.

Homodimer.

Its pathway is purine metabolism; purine nucleotide biosynthesis [regulation]. Functionally, is the main repressor of the genes involved in the de novo synthesis of purine nucleotides, regulating purB, purC, purEK, purF, purHD, purL, purMN and guaBA expression. PurR is allosterically activated to bind its cognate DNA by binding the purine corepressors, hypoxanthine or guanine, thereby effecting transcription repression. This is HTH-type transcriptional repressor PurR from Escherichia fergusonii (strain ATCC 35469 / DSM 13698 / CCUG 18766 / IAM 14443 / JCM 21226 / LMG 7866 / NBRC 102419 / NCTC 12128 / CDC 0568-73).